A 527-amino-acid polypeptide reads, in one-letter code: CTP synthase (527 aa).

The amidoligase domain stretch occupies residues 1–270; it reads MKYIFVTGGV…ADVLCQLLQL (270 aa). Ser-12 is a CTP binding site. Ser-12 contributes to the UTP binding site. Residues 13–18 and Asp-70 contribute to the ATP site; that span reads GLGKGI. Residues Asp-70 and Glu-145 each contribute to the Mg(2+) site. CTP contacts are provided by residues 152–154, 191–196, and Lys-227; these read DIE and KTKPTQ. Residues 191–196 and Lys-227 each bind UTP; that span reads KTKPTQ. Residues 292-525 form the Glutamine amidotransferase type-1 domain; the sequence is TIGIVSKYGK…VEACLKNRGK (234 aa). An L-glutamine-binding site is contributed by Gly-349. Catalysis depends on Cys-376, which acts as the Nucleophile; for glutamine hydrolysis. L-glutamine is bound by residues 377–380, Glu-400, and Arg-455; that span reads LGFQ. Residues His-498 and Glu-500 contribute to the active site.

Belongs to the CTP synthase family. In terms of assembly, homotetramer.

The catalysed reaction is UTP + L-glutamine + ATP + H2O = CTP + L-glutamate + ADP + phosphate + 2 H(+). It carries out the reaction L-glutamine + H2O = L-glutamate + NH4(+). The enzyme catalyses UTP + NH4(+) + ATP = CTP + ADP + phosphate + 2 H(+). It functions in the pathway pyrimidine metabolism; CTP biosynthesis via de novo pathway; CTP from UDP: step 2/2. Allosterically activated by GTP, when glutamine is the substrate; GTP has no effect on the reaction when ammonia is the substrate. The allosteric effector GTP functions by stabilizing the protein conformation that binds the tetrahedral intermediate(s) formed during glutamine hydrolysis. Inhibited by the product CTP, via allosteric rather than competitive inhibition. In terms of biological role, catalyzes the ATP-dependent amination of UTP to CTP with either L-glutamine or ammonia as the source of nitrogen. Regulates intracellular CTP levels through interactions with the four ribonucleotide triphosphates. The polypeptide is CTP synthase (Methanospirillum hungatei JF-1 (strain ATCC 27890 / DSM 864 / NBRC 100397 / JF-1)).